A 206-amino-acid polypeptide reads, in one-letter code: N-(5'-phosphoribosyl)anthranilate isomerase (206 aa).

Belongs to the TrpF family.

It catalyses the reaction N-(5-phospho-beta-D-ribosyl)anthranilate = 1-(2-carboxyphenylamino)-1-deoxy-D-ribulose 5-phosphate. It participates in amino-acid biosynthesis; L-tryptophan biosynthesis; L-tryptophan from chorismate: step 3/5. The sequence is that of N-(5'-phosphoribosyl)anthranilate isomerase from Pseudomonas putida (strain ATCC 47054 / DSM 6125 / CFBP 8728 / NCIMB 11950 / KT2440).